The following is a 295-amino-acid chain: Fructose-bisphosphate aldolase class 1 (295 aa).

Residue Glu176 is the Proton acceptor of the active site. Lys213 functions as the Schiff-base intermediate with dihydroxyacetone-P in the catalytic mechanism.

This sequence belongs to the class I fructose-bisphosphate aldolase family.

It catalyses the reaction beta-D-fructose 1,6-bisphosphate = D-glyceraldehyde 3-phosphate + dihydroxyacetone phosphate. Its pathway is carbohydrate degradation; glycolysis; D-glyceraldehyde 3-phosphate and glycerone phosphate from D-glucose: step 4/4. This chain is Fructose-bisphosphate aldolase class 1, found in Clostridium acetobutylicum (strain ATCC 824 / DSM 792 / JCM 1419 / IAM 19013 / LMG 5710 / NBRC 13948 / NRRL B-527 / VKM B-1787 / 2291 / W).